The primary structure comprises 315 residues: tRNA dimethylallyltransferase (315 aa).

Glycine 9–threonine 16 provides a ligand contact to ATP. A substrate-binding site is contributed by threonine 11–threonine 16. Interaction with substrate tRNA regions lie at residues aspartate 34–leucine 37 and glutamine 158–arginine 162.

Belongs to the IPP transferase family. As to quaternary structure, monomer. The cofactor is Mg(2+).

It carries out the reaction adenosine(37) in tRNA + dimethylallyl diphosphate = N(6)-dimethylallyladenosine(37) in tRNA + diphosphate. In terms of biological role, catalyzes the transfer of a dimethylallyl group onto the adenine at position 37 in tRNAs that read codons beginning with uridine, leading to the formation of N6-(dimethylallyl)adenosine (i(6)A). The chain is tRNA dimethylallyltransferase from Acidithiobacillus ferrooxidans (strain ATCC 53993 / BNL-5-31) (Leptospirillum ferrooxidans (ATCC 53993)).